The chain runs to 206 residues: Imidazoleglycerol-phosphate dehydratase (206 aa).

It belongs to the imidazoleglycerol-phosphate dehydratase family.

It localises to the cytoplasm. It catalyses the reaction D-erythro-1-(imidazol-4-yl)glycerol 3-phosphate = 3-(imidazol-4-yl)-2-oxopropyl phosphate + H2O. It participates in amino-acid biosynthesis; L-histidine biosynthesis; L-histidine from 5-phospho-alpha-D-ribose 1-diphosphate: step 6/9. The sequence is that of Imidazoleglycerol-phosphate dehydratase from Cutibacterium acnes (strain DSM 16379 / KPA171202) (Propionibacterium acnes).